The following is a 96-amino-acid chain: Ferredoxin-1 (96 aa).

The region spanning 1-95 (MKVIINGKEF…DCDEIVIESE (95 aa)) is the 2Fe-2S ferredoxin-type domain. Cys34, Cys39, Cys42, and Cys78 together coordinate [2Fe-2S] cluster. Residues Cys52 and Cys87 are joined by a disulfide bond.

This sequence belongs to the 2Fe2S plant-type ferredoxin family. The cofactor is [2Fe-2S] cluster.

Its function is as follows. Ferredoxins are iron-sulfur proteins that transfer electrons in a wide variety of metabolic reactions. This chain is Ferredoxin-1 (fdx1), found in Aquifex aeolicus (strain VF5).